The chain runs to 251 residues: 5'-nucleotidase SurE (251 aa).

Asp-8, Asp-9, Ser-39, and Asn-91 together coordinate a divalent metal cation.

This sequence belongs to the SurE nucleotidase family. Requires a divalent metal cation as cofactor.

Its subcellular location is the cytoplasm. The catalysed reaction is a ribonucleoside 5'-phosphate + H2O = a ribonucleoside + phosphate. Its function is as follows. Nucleotidase that shows phosphatase activity on nucleoside 5'-monophosphates. The polypeptide is 5'-nucleotidase SurE (Thioalkalivibrio sulfidiphilus (strain HL-EbGR7)).